We begin with the raw amino-acid sequence, 702 residues long: Archaeal Lon protease (702 aa).

A disordered region spans residues 1 to 63 (MSNESTNDAP…VGVEGDVSID (63 aa)). Residues 1–183 (MSNESTNDAP…EARKRNQMRS (183 aa)) are Cytoplasmic-facing. Acidic residues predominate over residues 10 to 48 (PPDDDPDDPEPSVDHDDTDGLQDDPADSVDDAGEVDDLE). 117–124 (GSPGTGKS) is a binding site for ATP. Residues 184 to 201 (FLMWIMILLAVGYALLIA) traverse the membrane as a helical segment. The Extracellular segment spans residues 202 to 206 (TPARP). A helical transmembrane segment spans residues 207-223 (LLALLSAAGIYLLFRYT). Residues 224-702 (NRGSDAMVPK…GTTGGNPSPQ (479 aa)) lie on the Cytoplasmic side of the membrane. Residues 487–667 (EEAVGRVNGL…SEVLDVALVG (181 aa)) form the Lon proteolytic domain. Residues serine 574 and lysine 617 contribute to the active site.

Belongs to the peptidase S16 family. Archaeal LonB subfamily. In terms of assembly, homohexamer. Organized in a ring with a central cavity.

Its subcellular location is the cell membrane. In terms of biological role, ATP-dependent serine protease that mediates the selective degradation of mutant and abnormal proteins as well as certain short-lived regulatory proteins. Degrades polypeptides processively. This chain is Archaeal Lon protease, found in Halobacterium salinarum (strain ATCC 700922 / JCM 11081 / NRC-1) (Halobacterium halobium).